The chain runs to 274 residues: Syntaxin-12 (274 aa).

2 disordered regions span residues 1-20 and 128-147; these read MSYGPLDMYRNPGPSGPQPR and EKESIARARAGSRLSAEDRQ. S2 is subject to N-acetylserine. At 2 to 250 the chain is on the cytoplasmic side; sequence SYGPLDMYRN…AYYQKKSRKK (249 aa). Residues 33 to 130 adopt a coiled-coil conformation; that stretch reads IQRISQATAQ…QRKVSEKEKE (98 aa). Phosphoserine is present on residues S139, S142, S218, and S225. The t-SNARE coiled-coil homology domain occupies 178–240; it reads LELIKERETA…ERATDQLQRA (63 aa). The chain crosses the membrane as a helical; Anchor for type IV membrane protein span at residues 251 to 271; that stretch reads MCILVLVLSVIVTVLVVVIWV. The Vesicular segment spans residues 272-274; the sequence is ASK.

Belongs to the syntaxin family. As to quaternary structure, associates with the BLOC-1 complex. Interacts with BLOC1S6. Interacts with NAPA and SNAP23. Identified in a complex containing STX6, STX12, VAMP4 and VTI1A. Interacts with GRIPAP1. Forms a complex with GRIP1, GRIA2 and NSG1; controls the intracellular fate of AMPAR and the endosomal sorting of the GRIA2 subunit toward recycling and membrane targeting. Interacts with NSG1. Interacts with TPC1. Interacts (via N-terminus) with VPS13B.

Its subcellular location is the endosome membrane. The protein localises to the golgi apparatus membrane. It localises to the endomembrane system. The protein resides in the early endosome membrane. It is found in the recycling endosome membrane. SNARE promoting fusion of transport vesicles with target membranes. Together with SNARE STX6, promotes movement of vesicles from endosomes to the cell membrane, and may therefore function in the endocytic recycling pathway. Through complex formation with GRIP1, GRIA2 and NSG1 controls the intracellular fate of AMPAR and the endosomal sorting of the GRIA2 subunit toward recycling and membrane targeting. This is Syntaxin-12 (Stx12) from Mus musculus (Mouse).